A 676-amino-acid polypeptide reads, in one-letter code: MSRRALRRLRGEQRGQEPLGPGALHFDLRDDDDAEEEGPKRELGVRRPGGAGKEGVRVNNRFELINIDDLEDDPVVNGERSGCALTDAVAPGNKGRGQRGNTESKTDGDDTETVPSEQSHASGKLRKKKKKQKNKKSSTGEASENGLEDIDRILERIEDSTGLNRPGPAPLSSRKHVLYVEHRHLNPDTELKRYFGARAILGEQRPRQRQRVYPKCTWLTTPKSTWPRYSKPGLSMRLLESKKGLSFFAFEHSEEYQQAQHKFLVAVESMEPNNIVVLLQTSPYHVDSLLQLSDACRFQEDQEMARDLVERALYSMECAFHPLFSLTSGACRLDYRRPENRSFYLALYKQMSFLEKRGCPRTALEYCKLILSLEPDEDPLCMLLLIDHLALRARNYEYLIRLFQEWEAHRNLSQLPNFAFSVPLAYFLLSQQTDLPECEQSSARQKASLLIQQALTMFPGVLLPLLESCSVRPDASVSSHRFFGPNAEISQPPALSQLVNLYLGRSHFLWKEPATMSWLEENVHEVLQAVDAGDPAVEACENRRKVLYQRAPRNIHRHVILSEIKEAVAALPPDVTTQSVMGFDPLPPSDTIYSYVRPERLSPISHGNTIALFFRSLLPNYTMEGERPEEGVAGGLNRNQGLNRLMLAVRDMMANFHLNDLEAPHEDDAEGEGEWD.

Disordered regions lie at residues 1-59 and 85-147; these read MSRR…VRVN and LTDA…ENGL. Residues 123–136 are compositionally biased toward basic residues; it reads GKLRKKKKKQKNKK. S602 carries the post-translational modification Phosphoserine.

The protein belongs to the TCF25 family. Component of the ribosome quality control complex (RQC), composed of the E3 ubiquitin ligase LTN1, TCF25 and NEMF associated with the 60S ribosomal subunit. Interacts (via C-terminus) with NFATC4; the interaction leads to suppresson of NFATC4 transcription factor activity and is reduced following stimulation with angiotensin-2. Interacts with XIAP. As to expression, in the embryo, widely expressed with highest levels in brain. In the adult, highest expression is found in the heart. Repressed in cardiac tissue of patients with heart failure (at protein level). mRNA levels in the heart are unchanged in patients with heart failure.

The protein resides in the nucleus. The protein localises to the cytoplasm. It is found in the cytosol. Component of the ribosome quality control complex (RQC), a ribosome-associated complex that mediates ubiquitination and extraction of incompletely synthesized nascent chains for proteasomal degradation. In the RQC complex, required to promote formation of 'Lys-48'-linked polyubiquitin chains during ubiquitination of incompletely synthesized proteins by LTN1. May negatively regulate the calcineurin-NFAT signaling cascade by suppressing the activity of transcription factor NFATC4. May play a role in cell death control. This Homo sapiens (Human) protein is Ribosome quality control complex subunit TCF25.